A 511-amino-acid chain; its full sequence is Tyrosine--tRNA ligase, chloroplastic/mitochondrial (511 aa).

L-tyrosine is bound at residue tyrosine 118. Aspartate 122 provides a ligand contact to ATP. Positions proline 123–asparagine 132 match the 'HIGH' region motif. 5 residues coordinate L-tyrosine: aspartate 162, tyrosine 256, glutamine 260, aspartate 263, and glutamine 282. The 'KMSKS' region motif lies at lysine 318–serine 322. An ATP-binding site is contributed by lysine 321. Residues leucine 444–isoleucine 510 form the S4 RNA-binding domain.

Belongs to the class-I aminoacyl-tRNA synthetase family.

It localises to the plastid. Its subcellular location is the chloroplast. The protein resides in the mitochondrion. The enzyme catalyses tRNA(Tyr) + L-tyrosine + ATP = L-tyrosyl-tRNA(Tyr) + AMP + diphosphate + H(+). In terms of biological role, catalyzes the attachment of tyrosine to tRNA(Tyr) in a two-step reaction: tyrosine is first activated by ATP to form Tyr-AMP and then transferred to the acceptor end of tRNA(Tyr). The sequence is that of Tyrosine--tRNA ligase, chloroplastic/mitochondrial from Arabidopsis thaliana (Mouse-ear cress).